We begin with the raw amino-acid sequence, 729 residues long: Fatty acid oxidation complex subunit alpha (729 aa).

The segment at 1-189 (MLYQSETLQL…KIGLVDAVVD (189 aa)) is enoyl-CoA hydratase/isomerase. Asp296 lines the substrate pocket. The tract at residues 311-729 (AAPKLAAVLG…LLDVSTNQPA (419 aa)) is 3-hydroxyacyl-CoA dehydrogenase. NAD(+)-binding positions include Met324, Asp343, 400 to 402 (VVE), Lys407, and Ser429. His450 functions as the For 3-hydroxyacyl-CoA dehydrogenase activity in the catalytic mechanism. NAD(+) is bound at residue Asn453. Residues Asn500 and Tyr660 each coordinate substrate.

The protein in the N-terminal section; belongs to the enoyl-CoA hydratase/isomerase family. It in the C-terminal section; belongs to the 3-hydroxyacyl-CoA dehydrogenase family. Heterotetramer of two alpha chains (FadB) and two beta chains (FadA).

The catalysed reaction is a (3S)-3-hydroxyacyl-CoA + NAD(+) = a 3-oxoacyl-CoA + NADH + H(+). The enzyme catalyses a (3S)-3-hydroxyacyl-CoA = a (2E)-enoyl-CoA + H2O. It carries out the reaction a 4-saturated-(3S)-3-hydroxyacyl-CoA = a (3E)-enoyl-CoA + H2O. It catalyses the reaction (3S)-3-hydroxybutanoyl-CoA = (3R)-3-hydroxybutanoyl-CoA. The catalysed reaction is a (3Z)-enoyl-CoA = a 4-saturated (2E)-enoyl-CoA. The enzyme catalyses a (3E)-enoyl-CoA = a 4-saturated (2E)-enoyl-CoA. The protein operates within lipid metabolism; fatty acid beta-oxidation. Functionally, involved in the aerobic and anaerobic degradation of long-chain fatty acids via beta-oxidation cycle. Catalyzes the formation of 3-oxoacyl-CoA from enoyl-CoA via L-3-hydroxyacyl-CoA. It can also use D-3-hydroxyacyl-CoA and cis-3-enoyl-CoA as substrate. This is Fatty acid oxidation complex subunit alpha from Yersinia pseudotuberculosis serotype IB (strain PB1/+).